The chain runs to 405 residues: Pentatricopeptide repeat-containing protein At1g11630, mitochondrial (405 aa).

The transit peptide at 1-72 (MAFLFRIRTS…RSTSLSPDYH (72 aa)) directs the protein to the mitochondrion. PPR repeat units follow at residues 74–108 (DRII…QPDP), 110–144 (SESF…EIPR), 145–180 (TVKS…GIEP), 181–215 (DLET…WIKP), 216–250 (TAAS…GVHV), 251–285 (GVAT…RMRP), 286–320 (NSVT…GYKP), 321–355 (DSEC…NWVP), and 356–386 (SFSV…VKEK).

Belongs to the PPR family. P subfamily.

It is found in the mitochondrion. The chain is Pentatricopeptide repeat-containing protein At1g11630, mitochondrial from Arabidopsis thaliana (Mouse-ear cress).